The chain runs to 66 residues: MKNKLKYYRALHNLTQEDLAKKLGVSRQTIIAIEKGKYDPSLKLAFKIAKFFGVKIEDIFIYEDDE.

The region spanning 5 to 59 is the HTH cro/C1-type domain; sequence LKYYRALHNLTQEDLAKKLGVSRQTIIAIEKGKYDPSLKLAFKIAKFFGVKIEDI. Positions 16-35 form a DNA-binding region, H-T-H motif; it reads QEDLAKKLGVSRQTIIAIEK.

This is an uncharacterized protein from Methanocaldococcus jannaschii (strain ATCC 43067 / DSM 2661 / JAL-1 / JCM 10045 / NBRC 100440) (Methanococcus jannaschii).